The primary structure comprises 433 residues: Pyrimidine-nucleoside phosphorylase (433 aa).

81-83 (KHS) provides a ligand contact to phosphate. 2 residues coordinate K(+): Gly88 and Thr90. Phosphate is bound by residues Thr92, 108-110 (KMS), and Thr120. Substrate is bound by residues Arg168 and Lys187. K(+)-binding residues include Leu243, Ala246, and Glu255.

This sequence belongs to the thymidine/pyrimidine-nucleoside phosphorylase family. Homodimer. It depends on K(+) as a cofactor.

The catalysed reaction is uridine + phosphate = alpha-D-ribose 1-phosphate + uracil. It catalyses the reaction thymidine + phosphate = 2-deoxy-alpha-D-ribose 1-phosphate + thymine. It carries out the reaction 2'-deoxyuridine + phosphate = 2-deoxy-alpha-D-ribose 1-phosphate + uracil. Catalyzes phosphorolysis of the pyrimidine nucleosides uridine, thymidine and 2'-deoxyuridine with the formation of the corresponding pyrimidine base and ribose-1-phosphate. In Staphylococcus aureus (strain bovine RF122 / ET3-1), this protein is Pyrimidine-nucleoside phosphorylase (pdp).